We begin with the raw amino-acid sequence, 241 residues long: Small ribosomal subunit protein uS5 (241 aa).

Positions 1–53 (MSDNEKETQVAEETQNTQAAAESNNEDRKSRRGQRGEGRRGERRNRREESHEN) are disordered. Over residues 11-22 (AEETQNTQAAAE) the composition is skewed to low complexity. Basic and acidic residues predominate over residues 25–53 (NEDRKSRRGQRGEGRRGERRNRREESHEN). One can recognise an S5 DRBM domain in the interval 55–118 (MLDRVVTINR…LDAKKHMFTV (64 aa)).

It belongs to the universal ribosomal protein uS5 family. In terms of assembly, part of the 30S ribosomal subunit. Contacts proteins S4 and S8.

Its function is as follows. With S4 and S12 plays an important role in translational accuracy. Located at the back of the 30S subunit body where it stabilizes the conformation of the head with respect to the body. In Bifidobacterium adolescentis (strain ATCC 15703 / DSM 20083 / NCTC 11814 / E194a), this protein is Small ribosomal subunit protein uS5.